A 466-amino-acid chain; its full sequence is Ras GTPase-activating protein-binding protein 1 (466 aa).

Residues 11-133 (VGREFVRQYY…FYVHNDIFRY (123 aa)) form the NTF2 domain. Glycyl lysine isopeptide (Lys-Gly) (interchain with G-Cter in ubiquitin) cross-links involve residues lysine 36, lysine 50, lysine 59, lysine 64, lysine 76, and lysine 123. The acidic disordered region stretch occupies residues 142-225 (VTEPQEESEE…EPVLEETAPE (84 aa)). Threonine 143 is modified (phosphothreonine). Disordered stretches follow at residues 144 to 172 (EPQE…DSGT) and 184 to 243 (EEHL…QTVQ). Acidic residues-rich tracts occupy residues 145 to 157 (PQEE…EEPE) and 185 to 206 (EHLE…EQEP). Serine 149 carries the phosphoserine modification. Phosphoserine occurs at positions 231, 232, 250, and 253. The segment at 255–329 (TSKNLPPSGA…REAGEQGDIE (75 aa)) is disordered. Composition is skewed to basic and acidic residues over residues 297–307 (PQRDQRVREQR) and 318–329 (PIREAGEQGDIE). The RRM domain occupies 340 to 415 (HQLFIGNLPH…VRLNVEEKKT (76 aa)). Residues lysine 353 and lysine 357 each participate in a glycyl lysine isopeptide (Lys-Gly) (interchain with G-Cter in ubiquitin) cross-link. Phosphoserine is present on serine 373. Lysine 376 is covalently cross-linked (Glycyl lysine isopeptide (Lys-Gly) (interchain with G-Cter in ubiquitin)). The residue at position 376 (lysine 376) is an N6-acetyllysine; alternate. Residue lysine 376 forms a Glycyl lysine isopeptide (Lys-Gly) (interchain with G-Cter in SUMO2); alternate linkage. Lysine 393 is covalently cross-linked (Glycyl lysine isopeptide (Lys-Gly) (interchain with G-Cter in ubiquitin); alternate). The segment at 410–466 (VEEKKTRAAREGDRRDNRLRGPGGPRGGLGGGMRGPPRGGMVQKPGFGVGRGLAPRQ) is RG-rich region. Basic and acidic residues predominate over residues 413-428 (KKTRAAREGDRRDNRL). A disordered region spans residues 413 to 466 (KKTRAAREGDRRDNRLRGPGGPRGGLGGGMRGPPRGGMVQKPGFGVGRGLAPRQ). An Asymmetric dimethylarginine modification is found at arginine 429. Gly residues predominate over residues 430–447 (GPGGPRGGLGGGMRGPPR). Arginine 435 is subject to Asymmetric dimethylarginine; alternate. Arginine 435 is subject to Dimethylated arginine; alternate. Omega-N-methylarginine; alternate is present on arginine 435. An Omega-N-methylarginine modification is found at arginine 447. Position 460 is a dimethylated arginine; alternate (arginine 460). Arginine 460 carries the omega-N-methylarginine; alternate modification. At arginine 465 the chain carries Omega-N-methylarginine.

As to quaternary structure, homodimer and oligomer. Component of a TAU mRNP complex, at least composed of IGF2BP1, ELAVL4 and G3BP1. Binds to the SH3 domain of Ras GTPase-activating protein (RASA1) in proliferating cells. No interaction in quiescent cells. Interacts (via NTF2 domain) with USP10; inhibiting stress granule formation by lowering G3BP1 valence. Interacts (via NTF2 domain) with CAPRIN1; promoting stress granule formation by lowering the saturation-concentration of G3BP1. Interacts (via NTF2 domain) with UBAP2L; promoting stress granule formation. Associates (via RG-rich region) with 40S ribosome subunits. Interacts with RPTOR and SPAG5; this complex is increased by oxidative stress. Interacts with ATXN2L. Interacts with STYXL1. Interacts with CGAS (via N-terminus); this interaction promotes the DNA-binding and activation of CGAS. Interacts (via C-terminus) with RIGI. Interacts with PABPC1. Interacts with QKI (isoforms QKI6 and QKI7); directing N(7)-methylguanine-containing mRNAs to stress granules. In terms of assembly, (Microbial infection) Interacts with Semliki forest virus non-structural protein 3 (via C-terminus); this interaction inhibits the formation of stress granules on viral mRNAs and the nsp3-G3BP1 complexes bind viral RNAs and probably orchestrate the assembly of viral replication complexes. (Microbial infection) Interacts with Chikungunya virus non-structural protein 3 (via C-terminus); this interaction inhibits the formation of stress granules on viral mRNAs and the nsp3-G3BP1 complexes bind viral RNAs and probably orchestrate the assembly of viral replication complexes. As to quaternary structure, (Microbial infection) Interacts with Sindbis virus non-structural protein 3 (via C-terminus); this interaction inhibits the formation of stress granules on viral mRNAs and the nsp3-G3BP1 complexes bind viral RNAs and probably orchestrate the assembly of viral replication complexes. In terms of assembly, (Microbial infection) Interacts with Zika virus capsid protein C; this interaction is probably linked to the inhibition of stress granules formation by the virus. (Microbial infection) Interacts with reovirus type 2 protein sigma-NS; this interaction induces the relocalization of G3BP1 to the outer periphery of sigma-NS/mu-Ns viral factories and is probably involved in the suppression of the integrated stress response by the virus. As to quaternary structure, (Microbial infection) Interacts with SARS-CoV-2 N protein; the interaction is enhanced by host HDAC6 which deacetylates the viral N protein and promotes N protein association with G3BP1, disrupting stress granule formation and facilitating viral replication. Interacts with HDAC6; the interaction increases during SARS-CoV-2 infection. The cofactor is Mg(2+). Post-translationally, phosphorylation of the acidic disordered region regulates stress granule assembly. RASA1-dependent phosphorylation of Ser-149 induces a conformational change that prevents self-association. Dephosphorylation after HRAS activation is required for stress granule assembly. Ser-149 phosphorylation induces partial nuclear localization. Ubiquitinated by TRIM21 via 'Lys-63'-linked polyubiquitination in the NTF2 domain in response to heat shock, leading to stress granule disassembly: ubiquitination promotes interaction with the FAF2 adapter, followed by interaction with VCP, which extracts G3BP1 from stress granules, leading to stress granule disassembly. In case of prolonged stress, ubiquitination by TRIM21 leads to autophagy-dependent degradation of G3BP1 via recruitment of ubiquitinated G3BP1 by SQSTM1 and/or CALCOCO2 to autophagosomes. In terms of processing, (Microbial infection) Cleaved by human enterovirus 71; this cleavage induces the disassembly of cytoplasmic stress granules. Cleaved by Foot-and-mouth disease virus; this cleavage suppresses the formation of cytoplasmic stress granules. Post-translationally, arg-435 is dimethylated, probably to asymmetric dimethylarginine. (Microbial infection) Cleaved by Encephalomyocarditis virus protease 3C; this cleavage suppresses the formation of cytoplasmic stress granules. In terms of tissue distribution, ubiquitous.

It is found in the cytoplasm. The protein localises to the cytosol. The protein resides in the perikaryon. Its subcellular location is the stress granule. It localises to the nucleus. It catalyses the reaction ATP + H2O = ADP + phosphate + H(+). Under physiological conditions, G3BP1 adopts a compact state that is stabilized by intramolecular interactions between the RG-rich and the acidic regions that inhibit phase separation. Upon stress, polysomes disassemble and mRNAs are released in an unfolded protein-free state. Binding of unfolded mRNA to G3BP1 outcompetes the intramolecular interactions and RNA-bound G3BP1 adopts an expanded conformation in which the RG-rich region becomes exposed to engage in protein-protein and protein-RNA interactions, allowing physical cross-linking of RNA molecules to form protein-RNA condensates, leading to liquid-liquid phase separation (LLPS). In terms of biological role, protein involved in various processes, such as stress granule formation and innate immunity. Plays an essential role in stress granule formation. Stress granules are membraneless compartments that store mRNAs and proteins, such as stalled translation pre-initiation complexes, in response to stress. Promotes formation of stress granules phase-separated membraneless compartment by undergoing liquid-liquid phase separation (LLPS) upon unfolded RNA-binding: functions as a molecular switch that triggers RNA-dependent LLPS in response to a rise in intracellular free RNA concentrations. Also acts as an ATP- and magnesium-dependent helicase: unwinds DNA/DNA, RNA/DNA, and RNA/RNA substrates with comparable efficiency. Acts unidirectionally by moving in the 5' to 3' direction along the bound single-stranded DNA. Unwinds preferentially partial DNA and RNA duplexes having a 17 bp annealed portion and either a hanging 3' tail or hanging tails at both 5'- and 3'-ends. Plays an essential role in innate immunity by promoting CGAS and RIGI activity. Participates in the DNA-triggered cGAS/STING pathway by promoting the DNA binding and activation of CGAS. Triggers the condensation of cGAS, a process probably linked to the formation of membrane-less organelles. Also enhances RIGI-induced type I interferon production probably by helping RIGI at sensing pathogenic RNA. May also act as a phosphorylation-dependent sequence-specific endoribonuclease in vitro: Cleaves exclusively between cytosine and adenine and cleaves MYC mRNA preferentially at the 3'-UTR. The polypeptide is Ras GTPase-activating protein-binding protein 1 (Homo sapiens (Human)).